The chain runs to 211 residues: Thiamine-phosphate synthase (211 aa).

4-amino-2-methyl-5-(diphosphooxymethyl)pyrimidine is bound by residues 40–42 (QLR) and Asn72. Mg(2+) contacts are provided by Asp73 and Asp92. Ser111 is a 4-amino-2-methyl-5-(diphosphooxymethyl)pyrimidine binding site. Position 136–138 (136–138 (TST)) interacts with 2-[(2R,5Z)-2-carboxy-4-methylthiazol-5(2H)-ylidene]ethyl phosphate. Lys139 is a 4-amino-2-methyl-5-(diphosphooxymethyl)pyrimidine binding site. 2-[(2R,5Z)-2-carboxy-4-methylthiazol-5(2H)-ylidene]ethyl phosphate contacts are provided by residues Gly167 and 187 to 188 (VS).

Belongs to the thiamine-phosphate synthase family. Mg(2+) serves as cofactor.

It catalyses the reaction 2-[(2R,5Z)-2-carboxy-4-methylthiazol-5(2H)-ylidene]ethyl phosphate + 4-amino-2-methyl-5-(diphosphooxymethyl)pyrimidine + 2 H(+) = thiamine phosphate + CO2 + diphosphate. The enzyme catalyses 2-(2-carboxy-4-methylthiazol-5-yl)ethyl phosphate + 4-amino-2-methyl-5-(diphosphooxymethyl)pyrimidine + 2 H(+) = thiamine phosphate + CO2 + diphosphate. It carries out the reaction 4-methyl-5-(2-phosphooxyethyl)-thiazole + 4-amino-2-methyl-5-(diphosphooxymethyl)pyrimidine + H(+) = thiamine phosphate + diphosphate. Its pathway is cofactor biosynthesis; thiamine diphosphate biosynthesis; thiamine phosphate from 4-amino-2-methyl-5-diphosphomethylpyrimidine and 4-methyl-5-(2-phosphoethyl)-thiazole: step 1/1. Functionally, condenses 4-methyl-5-(beta-hydroxyethyl)thiazole monophosphate (THZ-P) and 2-methyl-4-amino-5-hydroxymethyl pyrimidine pyrophosphate (HMP-PP) to form thiamine monophosphate (TMP). The sequence is that of Thiamine-phosphate synthase from Laribacter hongkongensis (strain HLHK9).